Reading from the N-terminus, the 553-residue chain is Transcription factor GAMYB (553 aa).

Residues 1 to 17 (MYRVKSESDCDMIHQEQ) are compositionally biased toward basic and acidic residues. The tract at residues 1–45 (MYRVKSESDCDMIHQEQMDSPVADDGSSGGSPHRGGGPPLKKGPW) is disordered. Residues 27-38 (SSGGSPHRGGGP) show a composition bias toward gly residues. 2 consecutive HTH myb-type domains span residues 37–89 (GPPL…ANHL) and 90–144 (RPNL…KRCQ). DNA-binding regions (H-T-H motif) lie at residues 65-89 (WNAV…ANHL) and 117-140 (WARM…NTRI). Residues 464 to 489 (PAQSTSMGSGEQVMGPKYEPGDTSPH) form a disordered region.

Interacts with MYBS1. As to expression, expressed in aleurone cells, inflorescence shoot apical region, stamen primordia, and tapetum cells of the anther. Expressed at low level in roots and vegetative shoots.

It localises to the nucleus. In terms of biological role, transcriptional activator of gibberellin-dependent alpha-amylase expression in aleurone cells. Involved in pollen and floral organs development. May bind to the 5'-TAACAAA-3' box of alpha-amylase promoter. Required for anther development. Functions in parallel with UDT1 to regulate early anther development. Functions upstream of the transcription factor TDR and may positively regulate its transcription. Required for pollen development. Probably required for controlling tapetal cell size and promoting tapetal programmed cell death (PCD) during anther development. Required for exine and Ubisch body formation in anthers. Interacts with the DNA specific motifs of giberrellin-up-regulated genes of anthers and regulates their expression. Positively regulates the expression of the laurate hydroxylase CYP703A3, known to be essential for the development of pollen exine and anther epicuticular layer. Functions with MYBS1 to integrate diverse nutrient starvation and gibberellin (GA) signaling pathways during germination of grains. Sugar, nitrogen and phosphate starvation signals converge and interconnect with GA to promote the co-nuclear import of GAMYB and MYBS1, resulting in the expression of a large set of GA-inducible hydrolases, transporters and regulators that are essential for mobilization of nutrient reserves in the endosperm to support seedling growth. The chain is Transcription factor GAMYB from Oryza sativa subsp. japonica (Rice).